We begin with the raw amino-acid sequence, 415 residues long: 4-hydroxy-3-methylbut-2-enyl diphosphate reductase (415 aa).

A [4Fe-4S] cluster-binding site is contributed by cysteine 66. Histidine 96 lines the (2E)-4-hydroxy-3-methylbut-2-enyl diphosphate pocket. A dimethylallyl diphosphate-binding site is contributed by histidine 96. Histidine 96 provides a ligand contact to isopentenyl diphosphate. Residue cysteine 158 coordinates [4Fe-4S] cluster. Histidine 186 contacts (2E)-4-hydroxy-3-methylbut-2-enyl diphosphate. Histidine 186 is a dimethylallyl diphosphate binding site. Histidine 186 contacts isopentenyl diphosphate. Glutamate 188 serves as the catalytic Proton donor. Position 259 (threonine 259) interacts with (2E)-4-hydroxy-3-methylbut-2-enyl diphosphate. Cysteine 297 lines the [4Fe-4S] cluster pocket. 4 residues coordinate (2E)-4-hydroxy-3-methylbut-2-enyl diphosphate: serine 326, serine 327, asparagine 328, and serine 388. Serine 326, serine 327, asparagine 328, and serine 388 together coordinate dimethylallyl diphosphate. Residues serine 326, serine 327, asparagine 328, and serine 388 each coordinate isopentenyl diphosphate.

It belongs to the IspH family. [4Fe-4S] cluster serves as cofactor.

It carries out the reaction isopentenyl diphosphate + 2 oxidized [2Fe-2S]-[ferredoxin] + H2O = (2E)-4-hydroxy-3-methylbut-2-enyl diphosphate + 2 reduced [2Fe-2S]-[ferredoxin] + 2 H(+). It catalyses the reaction dimethylallyl diphosphate + 2 oxidized [2Fe-2S]-[ferredoxin] + H2O = (2E)-4-hydroxy-3-methylbut-2-enyl diphosphate + 2 reduced [2Fe-2S]-[ferredoxin] + 2 H(+). It participates in isoprenoid biosynthesis; dimethylallyl diphosphate biosynthesis; dimethylallyl diphosphate from (2E)-4-hydroxy-3-methylbutenyl diphosphate: step 1/1. The protein operates within isoprenoid biosynthesis; isopentenyl diphosphate biosynthesis via DXP pathway; isopentenyl diphosphate from 1-deoxy-D-xylulose 5-phosphate: step 6/6. In terms of biological role, catalyzes the conversion of 1-hydroxy-2-methyl-2-(E)-butenyl 4-diphosphate (HMBPP) into a mixture of isopentenyl diphosphate (IPP) and dimethylallyl diphosphate (DMAPP). Acts in the terminal step of the DOXP/MEP pathway for isoprenoid precursor biosynthesis. The protein is 4-hydroxy-3-methylbut-2-enyl diphosphate reductase of Acaryochloris marina (strain MBIC 11017).